Reading from the N-terminus, the 460-residue chain is Phosphoglucomutase (460 aa).

Catalysis depends on serine 103, which acts as the Phosphoserine intermediate. Serine 103 is a Mg(2+) binding site. Substrate-binding positions include serine 103–histidine 104 and lysine 113. Positions 239, 241, and 243 each coordinate Mg(2+). Substrate contacts are provided by residues aspartate 243 to arginine 244, threonine 303, and glutamate 322 to serine 324.

The protein belongs to the phosphohexose mutase family. The cofactor is Mg(2+).

The protein localises to the cytoplasm. It carries out the reaction alpha-D-glucose 1-phosphate = alpha-D-glucose 6-phosphate. Functionally, this enzyme participates in both the breakdown and synthesis of glucose. This Neisseria meningitidis serogroup B (strain ATCC BAA-335 / MC58) protein is Phosphoglucomutase (pgm).